A 379-amino-acid chain; its full sequence is tRNA(Met) cytidine acetate ligase (379 aa).

ATP-binding positions include 7 to 20 (ITEY…HQYH), G100, N153, and R178.

Belongs to the TmcAL family.

Its subcellular location is the cytoplasm. The enzyme catalyses cytidine(34) in elongator tRNA(Met) + acetate + ATP = N(4)-acetylcytidine(34) in elongator tRNA(Met) + AMP + diphosphate. In terms of biological role, catalyzes the formation of N(4)-acetylcytidine (ac(4)C) at the wobble position of elongator tRNA(Met), using acetate and ATP as substrates. First activates an acetate ion to form acetyladenylate (Ac-AMP) and then transfers the acetyl group to tRNA to form ac(4)C34. The sequence is that of tRNA(Met) cytidine acetate ligase from Staphylococcus aureus (strain Mu3 / ATCC 700698).